The primary structure comprises 134 residues: D-ribose pyranase (134 aa).

The active-site Proton donor is H20. Substrate-binding positions include D28, H101, and 123 to 125 (YCN).

The protein belongs to the RbsD / FucU family. RbsD subfamily. In terms of assembly, homodecamer.

The protein resides in the cytoplasm. The enzyme catalyses beta-D-ribopyranose = beta-D-ribofuranose. It functions in the pathway carbohydrate metabolism; D-ribose degradation; D-ribose 5-phosphate from beta-D-ribopyranose: step 1/2. Its function is as follows. Catalyzes the interconversion of beta-pyran and beta-furan forms of D-ribose. This is D-ribose pyranase from Pseudomonas fluorescens (strain ATCC BAA-477 / NRRL B-23932 / Pf-5).